The primary structure comprises 209 residues: Ribosome maturation factor RimM (209 aa).

Positions 103–178 constitute a PRC barrel domain; sequence EGATYVSDLV…RIEMVLPQGM (76 aa). The tract at residues 184–209 is disordered; sequence PLSKAEKERQKSEADETREAGERRKR. Over residues 187-209 the composition is skewed to basic and acidic residues; the sequence is KAEKERQKSEADETREAGERRKR.

It belongs to the RimM family. Binds ribosomal protein uS19.

The protein localises to the cytoplasm. Functionally, an accessory protein needed during the final step in the assembly of 30S ribosomal subunit, possibly for assembly of the head region. Essential for efficient processing of 16S rRNA. May be needed both before and after RbfA during the maturation of 16S rRNA. It has affinity for free ribosomal 30S subunits but not for 70S ribosomes. This chain is Ribosome maturation factor RimM, found in Koribacter versatilis (strain Ellin345).